Here is a 100-residue protein sequence, read N- to C-terminus: Aspartyl/glutamyl-tRNA(Asn/Gln) amidotransferase subunit C (100 aa).

The protein belongs to the GatC family. Heterotrimer of A, B and C subunits.

It catalyses the reaction L-glutamyl-tRNA(Gln) + L-glutamine + ATP + H2O = L-glutaminyl-tRNA(Gln) + L-glutamate + ADP + phosphate + H(+). The enzyme catalyses L-aspartyl-tRNA(Asn) + L-glutamine + ATP + H2O = L-asparaginyl-tRNA(Asn) + L-glutamate + ADP + phosphate + 2 H(+). Functionally, allows the formation of correctly charged Asn-tRNA(Asn) or Gln-tRNA(Gln) through the transamidation of misacylated Asp-tRNA(Asn) or Glu-tRNA(Gln) in organisms which lack either or both of asparaginyl-tRNA or glutaminyl-tRNA synthetases. The reaction takes place in the presence of glutamine and ATP through an activated phospho-Asp-tRNA(Asn) or phospho-Glu-tRNA(Gln). This is Aspartyl/glutamyl-tRNA(Asn/Gln) amidotransferase subunit C from Erythrobacter litoralis (strain HTCC2594).